We begin with the raw amino-acid sequence, 176 residues long: Lipoprotein signal peptidase (176 aa).

Helical transmembrane passes span 12–32 (WYWV…WVLT), 67–87 (WQKW…TIWL), and 94–114 (VWRL…NLID). Active-site residues include D123 and D141. The chain crosses the membrane as a helical span at residues 133-153 (HFAAFNIADSAICIGAGLIIL).

This sequence belongs to the peptidase A8 family.

The protein localises to the cell inner membrane. The enzyme catalyses Release of signal peptides from bacterial membrane prolipoproteins. Hydrolyzes -Xaa-Yaa-Zaa-|-(S,diacylglyceryl)Cys-, in which Xaa is hydrophobic (preferably Leu), and Yaa (Ala or Ser) and Zaa (Gly or Ala) have small, neutral side chains.. It participates in protein modification; lipoprotein biosynthesis (signal peptide cleavage). In terms of biological role, this protein specifically catalyzes the removal of signal peptides from prolipoproteins. This is Lipoprotein signal peptidase from Shewanella sediminis (strain HAW-EB3).